Consider the following 449-residue polypeptide: MFLEIPRWLLALIILYLSIPLVVYYVIPYLFYGNKSTKKRIIIFVLGDVGHSPRICYHAISFSKLGWQVELCGYVEDTLPKIISSDPNITVHHMSNLKRKGGGTSVIFMVKKVLFQVLSIFKLLWELRGSDYILVQNPPSIPILPIAVLYKLTGCKLIIDWHNLAYSILQLKFKGNFYHPLVLISYMVEMIFSKFADYNLTVTEAMRKYLIQSFHLNPKRCAVLYDRPASQFQPLAGDISRQKALTTKAFIKNYIRDDFDTEKGDKIIVTSTSFTPDEDIGILLGALKIYENSYVKFDSSLPKILCFITGKGPLKEKYMKQVEEYDWKRCQIEFVWLSAEDYPKLLQLCDYGVSLHTSSSGLDLPMKILDMFGSGLPVIAMNYPVLDELVQHNVNGLKFVDRRELHESLIFAMKDADLYQKLKKNVTQEAENRWQSNWERTMRDLKLIH.

Over 1-7 the chain is Lumenal; it reads MFLEIPR. A helical membrane pass occupies residues 8–28; it reads WLLALIILYLSIPLVVYYVIP. The Dolichol recognition motif lies at 21-32; that stretch reads LVVYYVIPYLFY. At 29–104 the chain is on the cytoplasmic side; sequence YLFYGNKSTK…SNLKRKGGGT (76 aa). The helical intramembrane region spans 105-125; that stretch reads SVIFMVKKVLFQVLSIFKLLW. At 126-449 the chain is on the cytoplasmic side; sequence ELRGSDYILV…RTMRDLKLIH (324 aa). Positions 435-449 are required for oligomerization; that stretch reads QSNWERTMRDLKLIH.

This sequence belongs to the glycosyltransferase group 1 family. Glycosyltransferase 33 subfamily. In terms of assembly, homodimer. ALG1 forms mannosyltransferases (MT) heteromeric complexes with either ALG2 or ALG11.

It localises to the endoplasmic reticulum membrane. The enzyme catalyses an N,N'-diacetylchitobiosyl-diphospho-di-trans,poly-cis-dolichol + GDP-alpha-D-mannose = a beta-D-Man-(1-&gt;4)-beta-D-GlcNAc-(1-&gt;4)-alpha-D-GlcNAc-diphospho-di-trans,poly-cis-dolichol + GDP + H(+). The protein operates within protein modification; protein glycosylation. Participates in the formation of the lipid-linked precursor oligosaccharide for N-glycosylation. Involved in assembling the dolichol-pyrophosphate-GlcNAc(2)-Man(5) intermediate on the cytoplasmic surface of the ER. In Saccharomyces cerevisiae (strain ATCC 204508 / S288c) (Baker's yeast), this protein is Chitobiosyldiphosphodolichol beta-mannosyltransferase (ALG1).